A 108-amino-acid chain; its full sequence is Abscisic stress-ripening protein 3 (108 aa).

2 disordered regions span residues 1–34 and 84–108; these read MAEEKQHHRLFHHKNREEEGGPVDHKKKVKHHSH and FAFHEHHQKKEAKKEKKAAEKGRHH. Residues 15–24 are compositionally biased toward basic and acidic residues; it reads NREEEGGPVD. Positions 25–34 are enriched in basic residues; the sequence is HKKKVKHHSH. The span at 95-108 shows a compositional bias: basic and acidic residues; it reads AKKEKKAAEKGRHH.

This sequence belongs to the abscisic acid and water stress-induced protein family.

This is Abscisic stress-ripening protein 3 from Solanum lycopersicum (Tomato).